Consider the following 215-residue polypeptide: MAKRSIFRFADEKGLKVAARYGVLMSTSFIFALLFHSSVADVNTLWSPGPESAFDAAETYYTLVAGSHFIVKYTVYTIMGLNMIFHLIQATGAKGDDKLFFYSSTLLYLTALILFIVNVAPSMLVVKLQNYVQFPRNMHLSVLAASHVLVEFLLAGVILIQLGYVFGYHVQSIQQREYAEDMREQELAEKAKLESESATTQSVETVSTESVSKRK.

Topologically, residues 1–21 are cytoplasmic; sequence MAKRSIFRFADEKGLKVAARY. Residues 22–42 traverse the membrane as a helical segment; the sequence is GVLMSTSFIFALLFHSSVADV. At 43–67 the chain is on the extracellular side; that stretch reads NTLWSPGPESAFDAAETYYTLVAGS. Residues 68–88 form a helical membrane-spanning segment; the sequence is HFIVKYTVYTIMGLNMIFHLI. Residues 89–105 lie on the Cytoplasmic side of the membrane; the sequence is QATGAKGDDKLFFYSST. The helical transmembrane segment at 106–126 threads the bilayer; that stretch reads LLYLTALILFIVNVAPSMLVV. Topologically, residues 127-147 are extracellular; sequence KLQNYVQFPRNMHLSVLAASH. A helical membrane pass occupies residues 148–168; it reads VLVEFLLAGVILIQLGYVFGY. Over 169–215 the chain is Cytoplasmic; it reads HVQSIQQREYAEDMREQELAEKAKLESESATTQSVETVSTESVSKRK. Residues 190 to 215 are disordered; that stretch reads KAKLESESATTQSVETVSTESVSKRK. The segment covering 196–215 has biased composition (low complexity); sequence ESATTQSVETVSTESVSKRK.

The protein to yeast SHR3. In terms of assembly, monomer.

The protein localises to the endoplasmic reticulum membrane. Functionally, involved in amino acid permease processing and required for the efficient translocation of structurally related amino acid permeases from the endoplasmic reticulum to the plasma membrane. In Schizosaccharomyces pombe (strain 972 / ATCC 24843) (Fission yeast), this protein is Secretory component protein psh3 (psh3).